Consider the following 179-residue polypeptide: Large ribosomal subunit protein uL5 (179 aa).

The protein belongs to the universal ribosomal protein uL5 family. As to quaternary structure, part of the 50S ribosomal subunit; part of the 5S rRNA/L5/L18/L25 subcomplex. Contacts the 5S rRNA and the P site tRNA. Forms a bridge to the 30S subunit in the 70S ribosome.

Functionally, this is one of the proteins that bind and probably mediate the attachment of the 5S RNA into the large ribosomal subunit, where it forms part of the central protuberance. In the 70S ribosome it contacts protein S13 of the 30S subunit (bridge B1b), connecting the 2 subunits; this bridge is implicated in subunit movement. Contacts the P site tRNA; the 5S rRNA and some of its associated proteins might help stabilize positioning of ribosome-bound tRNAs. This Syntrophus aciditrophicus (strain SB) protein is Large ribosomal subunit protein uL5.